Consider the following 247-residue polypeptide: 2,3-bisphosphoglycerate-dependent phosphoglycerate mutase (247 aa).

Residues 8–15, 21–22, R60, 87–90, K98, 114–115, and 183–184 contribute to the substrate site; these read RHGQSLWN, TG, ERHY, RR, and GN. The Tele-phosphohistidine intermediate role is filled by H9. The Proton donor/acceptor role is filled by E87.

The protein belongs to the phosphoglycerate mutase family. BPG-dependent PGAM subfamily.

It catalyses the reaction (2R)-2-phosphoglycerate = (2R)-3-phosphoglycerate. Its pathway is carbohydrate degradation; glycolysis; pyruvate from D-glyceraldehyde 3-phosphate: step 3/5. In terms of biological role, catalyzes the interconversion of 2-phosphoglycerate and 3-phosphoglycerate. The protein is 2,3-bisphosphoglycerate-dependent phosphoglycerate mutase of Hydrogenobaculum sp. (strain Y04AAS1).